The primary structure comprises 440 residues: Diels-Alderase mycB (440 aa).

An N-terminal signal peptide occupies residues 1–18; it reads MGYLVKLACGLLLPLATA. N-linked (GlcNAc...) asparagine glycans are attached at residues Asn-80, Asn-155, and Asn-332.

It belongs to the Diels-Alderase family.

The catalysed reaction is (5S)-5-(2-methylpropyl)-3-[(2E,6R,8E,10E,12E)-6,8,10,12-tetramethyltetradeca-2,8,10,12-tetraenoyl]-2,5-dihydro-1H-pyrrol-2-one = (5S)-3-[(1S,2R,4aR,6R,8aS)-2-(but-2-en-2-yl)-3,4a,6-trimethyl-1,2,4a,5,6,7,8,8a-octahydronaphthalene-1-carbonyl]-5-(2-methylpropyl)-2,5-dihydro-1H-pyrrol-2-one. The enzyme catalyses (5Z)-5-(2-methylpropylidene)-3-[(2E,6R,8E,10E,12E)-6,8,10,12-tetramethyltetradeca-2,8,10,12-tetraenoyl]-2,5-dihydro-1H-pyrrol-2-one = myceliothermophin E. It functions in the pathway mycotoxin biosynthesis. In terms of biological role, diels-Alderase; part of the gene cluster that mediates the biosynthesis of myceliothermophins, mycotoxins that contain a trans-fused decalin ring system connected to a conjugated 3-pyrrolin-2-one moiety and that have potential anti-tumor properties. The polyketide synthase module (PKS) of the PKS-NRPS mycA is responsible for the synthesis of the octaketide backbone. The downstream nonribosomal peptide synthetase (NRPS) module then amidates the carboxyl end of the octaketide with a leucine. A reductase-like domain (R) at the C-terminus catalyzes the reductive release of the polyketide-amino acid intermediate. Because mycA lacks a designated enoylreductase (ER) domain, the required activity is provided the enoyl reductase mycC. Following mycA-catalyzed construction and release of aminoacyl polyketide aldehyde, Knoevenagel condensation yields the expected ketone. This C18 keto acyclic precursor is the substrate of the Diels-Alderase mycB, that catalyzes the Diels-Alder cycloaddition to produce myceliothermophin E. A yet unknown oxygenase involved in the production of myceliothermophin A, via substitution with a hydroxyl group at the C21, has still to be identified. The polypeptide is Diels-Alderase mycB (Thermothelomyces thermophilus (strain ATCC 42464 / BCRC 31852 / DSM 1799) (Sporotrichum thermophile)).